A 172-amino-acid chain; its full sequence is Translationally-controlled tumor protein (172 aa).

The TCTP domain maps to 1-172 (MIIYRDLISH…FKDGLEMEKC (172 aa)). Phosphoserine occurs at positions 46 and 53. Serine 64 is modified (phosphoserine; by PLK1). The tract at residues 70 to 172 (VDIVMNHHLQ…FKDGLEMEKC (103 aa)) is required for reduction of TSC22D1 protein stability.

Belongs to the TCTP family. Homodimer. Interacts with STEAP3. Interacts with TSC22D1; interaction results in the destabilization of TSC22D1 protein.

It is found in the cytoplasm. Its function is as follows. Involved in calcium binding and microtubule stabilization. Acts as a negative regulator of TSC22D1-mediated apoptosis, via interaction with and destabilization of TSC22D1 protein. The chain is Translationally-controlled tumor protein (Tpt1) from Mus musculus (Mouse).